A 158-amino-acid polypeptide reads, in one-letter code: UPF0102 protein GbCGDNIH1_0975 (158 aa).

The protein belongs to the UPF0102 family.

The sequence is that of UPF0102 protein GbCGDNIH1_0975 from Granulibacter bethesdensis (strain ATCC BAA-1260 / CGDNIH1).